A 146-amino-acid polypeptide reads, in one-letter code: Protein disulfide-isomerase 5-1 (146 aa).

The signal sequence occupies residues 1 to 25 (MTLGARLVAPMIILLLFIPIELVKA). In terms of domain architecture, Thioredoxin spans 26–133 (EVITLTPETF…LKAFVVEETE (108 aa)). Catalysis depends on nucleophile residues cysteine 55 and cysteine 58. Cysteines 55 and 58 form a disulfide.

Belongs to the protein disulfide isomerase family.

In terms of biological role, acts as a protein-folding catalyst that interacts with nascent polypeptides to catalyze the formation, isomerization, and reduction or oxidation of disulfide bonds. In Arabidopsis thaliana (Mouse-ear cress), this protein is Protein disulfide-isomerase 5-1 (PDIL5-1).